A 250-amino-acid chain; its full sequence is Anti-sigma-L factor RslA (250 aa).

At 1-115 the chain is on the cytoplasmic side; sequence MTMPLRGLGP…VHRRRRRTRL (115 aa). Residues 116–136 form a helical membrane-spanning segment; that stretch reads ITWVASSAAAAVLAIGVLVGV. Residues 137–250 lie on the Extracellular side of the membrane; sequence QGHSAAPQRA…TGQVLLQRSL (114 aa).

Interacts with ECF RNA polymerase sigma factor SigL; this should inhibit the interaction of SigL with the RNA polymerase catalytic core. Post-translationally, probably cleaved within the membrane by Rip1 near the cytoplasmic membrane interface.

The protein resides in the cell membrane. Functionally, an anti-sigma factor for extracytoplasmic function (ECF) sigma factor SigL. ECF sigma factors are held in an inactive form by an anti-sigma factor until released by regulated intramembrane proteolysis (RIP). RIP occurs when an extracytoplasmic signal triggers a concerted proteolytic cascade to transmit information and elicit cellular responses. The membrane-spanning regulatory substrate protein is first cut extracytoplasmically (site-1 protease, S1P), then within the membrane itself (site-2 protease, S2P, Rip1), while cytoplasmic proteases finish degrading the regulatory protein, liberating the sigma factor. This Mycobacterium tuberculosis (strain ATCC 35801 / TMC 107 / Erdman) protein is Anti-sigma-L factor RslA (rslA).